A 427-amino-acid polypeptide reads, in one-letter code: Peptidase B (427 aa).

Residues lysine 195 and aspartate 200 each coordinate Mn(2+). The active site involves lysine 207. Aspartate 218, aspartate 277, and glutamate 279 together coordinate Mn(2+). Arginine 281 is an active-site residue.

The protein belongs to the peptidase M17 family. As to quaternary structure, homohexamer. The cofactor is Mn(2+).

It is found in the cytoplasm. The enzyme catalyses Release of an N-terminal amino acid, Xaa, from a peptide or arylamide. Xaa is preferably Glu or Asp but may be other amino acids, including Leu, Met, His, Cys and Gln.. Probably plays an important role in intracellular peptide degradation. The protein is Peptidase B of Escherichia coli (strain SE11).